The chain runs to 457 residues: MAVSLWQQCIGRLQDELSAQQFSMWIRPLQAEMEGDTLVLYAPNRFVLDWVRDKYINSINQFFTEQLGDNAPKLRFDIGSRPSAKPQAPAPAAVKAAAPQPKPGNSFVSQPEPAVSNHRSNINPTYQFDNFVEGKSNQLGKAAALQVAENPGGAYNPLFLYGGTGLGKTHLLHAVGNGIIKNNPNAKVVYMHSERFVQDMVKALQNNAIEEFKRYYRSVDALFIDDIQFFANKDRSQEEFFHTFNALLEGNHQIILTSDRYPKEIDGVEDRLKSRFGWGLTVAIEPPELETRVAILMRKAQESGINLPDEVAFFIAKRLRSNVRELEGALNRVIANANFTGRPITIDFVREALRDLLALQEKLVTIDNIQKTVAEYYKIKMADMLSKRRSRSVARPRQMAMALSKELTNQSLPEIGDAFGGRDHTTVLHACRKIAQLREESHDIKEDYANLIRTLSS.

A domain I, interacts with DnaA modulators region spans residues 1–90 (MAVSLWQQCI…RPSAKPQAPA (90 aa)). Positions 79–120 (GSRPSAKPQAPAPAAVKAAAPQPKPGNSFVSQPEPAVSNHRS) are disordered. Low complexity predominate over residues 84 to 99 (AKPQAPAPAAVKAAAP). Residues 91-120 (PAAVKAAAPQPKPGNSFVSQPEPAVSNHRS) are domain II. Positions 121–337 (NINPTYQFDN…GALNRVIANA (217 aa)) are domain III, AAA+ region. Residues G165, G167, K168, and T169 each contribute to the ATP site. Residues 338-457 (NFTGRPITID…YANLIRTLSS (120 aa)) form a domain IV, binds dsDNA region.

The protein belongs to the DnaA family. Oligomerizes as a right-handed, spiral filament on DNA at oriC.

The protein resides in the cytoplasm. Its function is as follows. Plays an essential role in the initiation and regulation of chromosomal replication. ATP-DnaA binds to the origin of replication (oriC) to initiate formation of the DNA replication initiation complex once per cell cycle. Binds the DnaA box (a 9 base pair repeat at the origin) and separates the double-stranded (ds)DNA. Forms a right-handed helical filament on oriC DNA; dsDNA binds to the exterior of the filament while single-stranded (ss)DNA is stabiized in the filament's interior. The ATP-DnaA-oriC complex binds and stabilizes one strand of the AT-rich DNA unwinding element (DUE), permitting loading of DNA polymerase. After initiation quickly degrades to an ADP-DnaA complex that is not apt for DNA replication. Binds acidic phospholipids. This Shewanella amazonensis (strain ATCC BAA-1098 / SB2B) protein is Chromosomal replication initiator protein DnaA.